The following is a 555-amino-acid chain: Dihydroxy-acid dehydratase (555 aa).

D78 serves as a coordination point for Mg(2+). C119 contacts [2Fe-2S] cluster. Mg(2+)-binding residues include D120 and K121. Position 121 is an N6-carboxylysine (K121). C195 serves as a coordination point for [2Fe-2S] cluster. E444 provides a ligand contact to Mg(2+). S470 functions as the Proton acceptor in the catalytic mechanism.

Belongs to the IlvD/Edd family. Homodimer. The cofactor is [2Fe-2S] cluster. Mg(2+) is required as a cofactor.

It catalyses the reaction (2R)-2,3-dihydroxy-3-methylbutanoate = 3-methyl-2-oxobutanoate + H2O. The enzyme catalyses (2R,3R)-2,3-dihydroxy-3-methylpentanoate = (S)-3-methyl-2-oxopentanoate + H2O. It functions in the pathway amino-acid biosynthesis; L-isoleucine biosynthesis; L-isoleucine from 2-oxobutanoate: step 3/4. Its pathway is amino-acid biosynthesis; L-valine biosynthesis; L-valine from pyruvate: step 3/4. Functionally, functions in the biosynthesis of branched-chain amino acids. Catalyzes the dehydration of (2R,3R)-2,3-dihydroxy-3-methylpentanoate (2,3-dihydroxy-3-methylvalerate) into 2-oxo-3-methylpentanoate (2-oxo-3-methylvalerate) and of (2R)-2,3-dihydroxy-3-methylbutanoate (2,3-dihydroxyisovalerate) into 2-oxo-3-methylbutanoate (2-oxoisovalerate), the penultimate precursor to L-isoleucine and L-valine, respectively. This is Dihydroxy-acid dehydratase from Dehalococcoides mccartyi (strain CBDB1).